Consider the following 92-residue polypeptide: Large ribosomal subunit protein eL43 (92 aa).

Zn(2+)-binding residues include cysteine 39, cysteine 42, cysteine 57, and cysteine 60. The C4-type zinc-finger motif lies at 39-60 (CSFCGKTKMKRKAVGIWHCGSC).

This sequence belongs to the eukaryotic ribosomal protein eL43 family. As to quaternary structure, component of the large ribosomal subunit.

The protein resides in the cytoplasm. Its function is as follows. Component of the large ribosomal subunit. The ribosome is a large ribonucleoprotein complex responsible for the synthesis of proteins in the cell. The protein is Large ribosomal subunit protein eL43 (RPL37A) of Gallus gallus (Chicken).